The sequence spans 98 residues: NADH-ubiquinone oxidoreductase chain 4L (98 aa).

A run of 3 helical transmembrane segments spans residues 1 to 21 (MPII…GMLV), 29 to 49 (SLLC…LMAL), and 61 to 81 (IALL…LVSI).

It belongs to the complex I subunit 4L family. In terms of assembly, core subunit of respiratory chain NADH dehydrogenase (Complex I) which is composed of 45 different subunits.

It localises to the mitochondrion inner membrane. The enzyme catalyses a ubiquinone + NADH + 5 H(+)(in) = a ubiquinol + NAD(+) + 4 H(+)(out). In terms of biological role, core subunit of the mitochondrial membrane respiratory chain NADH dehydrogenase (Complex I) which catalyzes electron transfer from NADH through the respiratory chain, using ubiquinone as an electron acceptor. Part of the enzyme membrane arm which is embedded in the lipid bilayer and involved in proton translocation. The chain is NADH-ubiquinone oxidoreductase chain 4L (MT-ND4L) from Piliocolobus badius (Western red colobus).